Here is a 422-residue protein sequence, read N- to C-terminus: Probable metallocarboxypeptidase A (422 aa).

The first 17 residues, 1–17 (MRSVLSLALLAANVVTA), serve as a signal peptide directing secretion. The propeptide at 18–112 (AVVAPFDYSG…FEAYSAGYAP (95 aa)) is activation peptide. The Peptidase M14 domain occupies 119–419 (SYHSYQDHLS…AGTVAMLKAV (301 aa)). Residues His-179 and Glu-182 each coordinate Zn(2+). Substrate contacts are provided by residues 179-182 (HARE), Arg-237, and 254-255 (NR). A disulfide bridge connects residues Cys-248 and Cys-271. Residue His-309 coordinates Zn(2+). 310 to 311 (SY) contacts substrate. Glu-385 serves as the catalytic Proton donor/acceptor.

The protein belongs to the peptidase M14 family. Requires Zn(2+) as cofactor.

The protein localises to the secreted. In terms of biological role, extracellular metalloprotease that contributes to pathogenicity. The polypeptide is Probable metallocarboxypeptidase A (MCPA) (Arthroderma benhamiae (strain ATCC MYA-4681 / CBS 112371) (Trichophyton mentagrophytes)).